The chain runs to 67 residues: Sodium channel neurotoxin MeuNaTxalpha-10 (67 aa).

One can recognise an LCN-type CS-alpha/beta domain in the interval 2-66; that stretch reads RDGYIAKPHN…VPIRIPGKCH (65 aa). 4 cysteine pairs are disulfide-bonded: cysteine 12-cysteine 65, cysteine 16-cysteine 38, cysteine 24-cysteine 48, and cysteine 28-cysteine 50. A propeptide (removed by a carboxypeptidase) is located at residue arginine 67.

Belongs to the long (4 C-C) scorpion toxin superfamily. Sodium channel inhibitor family. Alpha subfamily. As to expression, expressed by the venom gland.

It is found in the secreted. In terms of biological role, alpha toxins bind voltage-independently at site-3 of sodium channels (Nav) and inhibit the inactivation of the activated channels, thereby blocking neuronal transmission. The sequence is that of Sodium channel neurotoxin MeuNaTxalpha-10 from Mesobuthus eupeus (Lesser Asian scorpion).